The sequence spans 502 residues: ATP synthase subunit alpha (502 aa).

ATP is bound at residue 169–176 (GDRQTGKT).

Belongs to the ATPase alpha/beta chains family. F-type ATPases have 2 components, CF(1) - the catalytic core - and CF(0) - the membrane proton channel. CF(1) has five subunits: alpha(3), beta(3), gamma(1), delta(1), epsilon(1). CF(0) has three main subunits: a(1), b(2) and c(9-12). The alpha and beta chains form an alternating ring which encloses part of the gamma chain. CF(1) is attached to CF(0) by a central stalk formed by the gamma and epsilon chains, while a peripheral stalk is formed by the delta and b chains.

The protein resides in the cell membrane. The catalysed reaction is ATP + H2O + 4 H(+)(in) = ADP + phosphate + 5 H(+)(out). Its function is as follows. Produces ATP from ADP in the presence of a proton gradient across the membrane. The alpha chain is a regulatory subunit. This Staphylococcus aureus (strain Mu3 / ATCC 700698) protein is ATP synthase subunit alpha.